The following is a 98-amino-acid chain: NADH-ubiquinone oxidoreductase chain 4L (98 aa).

3 helical membrane passes run 1-21 (MSPI…GLLI), 30-50 (LLCL…LALT), and 61-81 (IILL…LVMV).

This sequence belongs to the complex I subunit 4L family. In terms of assembly, core subunit of respiratory chain NADH dehydrogenase (Complex I) which is composed of 45 different subunits.

The protein localises to the mitochondrion inner membrane. The catalysed reaction is a ubiquinone + NADH + 5 H(+)(in) = a ubiquinol + NAD(+) + 4 H(+)(out). Its function is as follows. Core subunit of the mitochondrial membrane respiratory chain NADH dehydrogenase (Complex I) which catalyzes electron transfer from NADH through the respiratory chain, using ubiquinone as an electron acceptor. Part of the enzyme membrane arm which is embedded in the lipid bilayer and involved in proton translocation. The polypeptide is NADH-ubiquinone oxidoreductase chain 4L (MT-ND4L) (Chrysochloris asiatica (Cape golden mole)).